The primary structure comprises 65 residues: Large ribosomal subunit protein uL29 (65 aa).

Belongs to the universal ribosomal protein uL29 family.

In Parabacteroides distasonis (strain ATCC 8503 / DSM 20701 / CIP 104284 / JCM 5825 / NCTC 11152), this protein is Large ribosomal subunit protein uL29.